The sequence spans 361 residues: Phosphoserine aminotransferase (361 aa).

Arg43 contacts L-glutamate. Residues 77–78, Trp103, Thr153, Asp173, and Gln196 each bind pyridoxal 5'-phosphate; that span reads AS. N6-(pyridoxal phosphate)lysine is present on Lys197. Position 238–239 (238–239) interacts with pyridoxal 5'-phosphate; that stretch reads NT.

The protein belongs to the class-V pyridoxal-phosphate-dependent aminotransferase family. SerC subfamily. Homodimer. It depends on pyridoxal 5'-phosphate as a cofactor.

The protein localises to the cytoplasm. It catalyses the reaction O-phospho-L-serine + 2-oxoglutarate = 3-phosphooxypyruvate + L-glutamate. The catalysed reaction is 4-(phosphooxy)-L-threonine + 2-oxoglutarate = (R)-3-hydroxy-2-oxo-4-phosphooxybutanoate + L-glutamate. Its pathway is amino-acid biosynthesis; L-serine biosynthesis; L-serine from 3-phospho-D-glycerate: step 2/3. It participates in cofactor biosynthesis; pyridoxine 5'-phosphate biosynthesis; pyridoxine 5'-phosphate from D-erythrose 4-phosphate: step 3/5. Functionally, catalyzes the reversible conversion of 3-phosphohydroxypyruvate to phosphoserine and of 3-hydroxy-2-oxo-4-phosphonooxybutanoate to phosphohydroxythreonine. The chain is Phosphoserine aminotransferase from Ectopseudomonas mendocina (strain ymp) (Pseudomonas mendocina).